The chain runs to 230 residues: MKQLEELLSTSFDIQFNDLTLLETAFTHTSYANEHRLLNVSHNERLEFLGDAVLQLIISEYLFAKYPKKTEGDMSKLRSMIVREESLAGFSRFCSFDAYIKLGKGEEKSGGRRRDTILGDLFEAFLGALLLDKGIDAVRRFLKQVMIPQVEKGNFERVKDYKTCLQEFLQAKGDVVIDYQVISEKGPAHAKQFEVSIVVNGAVLSKGLGKSKKLAEQDAAKNALAQLSEV.

The RNase III domain maps to 1-134 (MKQLEELLST…FLGALLLDKG (134 aa)). Glu-47 contributes to the Mg(2+) binding site. Asp-51 is an active-site residue. Positions 120 and 123 each coordinate Mg(2+). The active site involves Glu-123. In terms of domain architecture, DRBM spans 160–229 (DYKTCLQEFL…AKNALAQLSE (70 aa)).

Belongs to the ribonuclease III family. In terms of assembly, homodimer. The cofactor is Mg(2+).

It is found in the cytoplasm. The catalysed reaction is Endonucleolytic cleavage to 5'-phosphomonoester.. Digests double-stranded RNA. Involved in the processing of primary rRNA transcript to yield the immediate precursors to the large and small rRNAs (23S and 16S). Processes some mRNAs, and tRNAs when they are encoded in the rRNA operon. Processes pre-crRNA and tracrRNA of type II CRISPR loci if present in the organism. This is Ribonuclease 3 from Streptococcus pyogenes serotype M2 (strain MGAS10270).